The sequence spans 289 residues: Pantothenate synthetase (289 aa).

An ATP-binding site is contributed by 33 to 40; it reads MGYLHEGH. The active-site Proton donor is the His40. A (R)-pantoate-binding site is contributed by Gln70. Gln70 provides a ligand contact to beta-alanine. Residue 157 to 160 participates in ATP binding; it reads GEKD. Position 163 (Gln163) interacts with (R)-pantoate. ATP-binding positions include Val186 and 194–197; that span reads LSSR.

Belongs to the pantothenate synthetase family. In terms of assembly, homodimer.

Its subcellular location is the cytoplasm. The enzyme catalyses (R)-pantoate + beta-alanine + ATP = (R)-pantothenate + AMP + diphosphate + H(+). It participates in cofactor biosynthesis; (R)-pantothenate biosynthesis; (R)-pantothenate from (R)-pantoate and beta-alanine: step 1/1. Functionally, catalyzes the condensation of pantoate with beta-alanine in an ATP-dependent reaction via a pantoyl-adenylate intermediate. In Anaeromyxobacter dehalogenans (strain 2CP-C), this protein is Pantothenate synthetase.